We begin with the raw amino-acid sequence, 64 residues long: Large ribosomal subunit protein bL35 (64 aa).

The protein belongs to the bacterial ribosomal protein bL35 family.

This Vibrio parahaemolyticus serotype O3:K6 (strain RIMD 2210633) protein is Large ribosomal subunit protein bL35.